The primary structure comprises 360 residues: Sorbitol dehydrogenase (360 aa).

A Zn(2+)-binding site is contributed by Cys-42. Tyr-48 serves as a coordination point for substrate. Zn(2+) is bound by residues His-67 and Glu-68. Residue Glu-153 participates in substrate binding. Residues Asp-201, Arg-206, 277-279, and 301-303 contribute to the NAD(+) site; these read AGN and SFR. Residues Arg-303 and Tyr-304 each coordinate substrate.

Belongs to the zinc-containing alcohol dehydrogenase family. As to quaternary structure, homotetramer. It depends on Zn(2+) as a cofactor.

The enzyme catalyses keto-D-fructose + NADH + H(+) = D-sorbitol + NAD(+). Polyol dehydrogenase that catalyzes the reversible NAD(+)-dependent oxidation of various sugar alcohols. Is active with D-sorbitol (D-glucitol) as substrate, leading to the C2-oxidized product D-fructose. Suppresses growth arrest induced by a p53 tumor mutant in fission yeast. The protein is Sorbitol dehydrogenase (tms1) of Schizosaccharomyces pombe (strain 972 / ATCC 24843) (Fission yeast).